A 463-amino-acid polypeptide reads, in one-letter code: ATP-dependent protease ATPase subunit HslU (463 aa).

ATP is bound by residues isoleucine 19, 61-66 (GVGKTE), aspartate 277, glutamate 341, and arginine 413.

The protein belongs to the ClpX chaperone family. HslU subfamily. As to quaternary structure, a double ring-shaped homohexamer of HslV is capped on each side by a ring-shaped HslU homohexamer. The assembly of the HslU/HslV complex is dependent on binding of ATP.

Its subcellular location is the cytoplasm. Functionally, ATPase subunit of a proteasome-like degradation complex; this subunit has chaperone activity. The binding of ATP and its subsequent hydrolysis by HslU are essential for unfolding of protein substrates subsequently hydrolyzed by HslV. HslU recognizes the N-terminal part of its protein substrates and unfolds these before they are guided to HslV for hydrolysis. The chain is ATP-dependent protease ATPase subunit HslU from Bacillus cytotoxicus (strain DSM 22905 / CIP 110041 / 391-98 / NVH 391-98).